Reading from the N-terminus, the 409-residue chain is 8-amino-7-oxononanoate synthase (409 aa).

Arginine 20 provides a ligand contact to substrate. Residue 116–117 (GY) participates in pyridoxal 5'-phosphate binding. Histidine 141 is a binding site for substrate. Serine 187, histidine 215, and threonine 243 together coordinate pyridoxal 5'-phosphate. Lysine 246 bears the N6-(pyridoxal phosphate)lysine mark. Threonine 369 contacts substrate.

The protein belongs to the class-II pyridoxal-phosphate-dependent aminotransferase family. BioF subfamily. Homodimer. It depends on pyridoxal 5'-phosphate as a cofactor.

It catalyses the reaction 6-carboxyhexanoyl-[ACP] + L-alanine + H(+) = (8S)-8-amino-7-oxononanoate + holo-[ACP] + CO2. It functions in the pathway cofactor biosynthesis; biotin biosynthesis. Catalyzes the decarboxylative condensation of pimeloyl-[acyl-carrier protein] and L-alanine to produce 8-amino-7-oxononanoate (AON), [acyl-carrier protein], and carbon dioxide. The polypeptide is 8-amino-7-oxononanoate synthase (Polaromonas naphthalenivorans (strain CJ2)).